A 414-amino-acid chain; its full sequence is DNA primase small subunit PriS (414 aa).

Catalysis depends on residues aspartate 98, aspartate 100, and aspartate 312.

Belongs to the eukaryotic-type primase small subunit family. In terms of assembly, heterodimer of a small subunit (PriS) and a large subunit (PriL). Mg(2+) is required as a cofactor. Requires Mn(2+) as cofactor.

Functionally, catalytic subunit of DNA primase, an RNA polymerase that catalyzes the synthesis of short RNA molecules used as primers for DNA polymerase during DNA replication. The small subunit contains the primase catalytic core and has DNA synthesis activity on its own. Binding to the large subunit stabilizes and modulates the activity, increasing the rate of DNA synthesis while decreasing the length of the DNA fragments, and conferring RNA synthesis capability. The DNA polymerase activity may enable DNA primase to also catalyze primer extension after primer synthesis. May also play a role in DNA repair. This Methanosarcina barkeri (strain Fusaro / DSM 804) protein is DNA primase small subunit PriS.